The sequence spans 329 residues: Beta-ketoacyl-[acyl-carrier-protein] synthase III (329 aa).

Residues C113 and H255 contribute to the active site. The tract at residues Q256–R260 is ACP-binding. The active site involves N285.

The protein belongs to the thiolase-like superfamily. FabH family. As to quaternary structure, homodimer.

It localises to the cytoplasm. The enzyme catalyses malonyl-[ACP] + acetyl-CoA + H(+) = 3-oxobutanoyl-[ACP] + CO2 + CoA. It participates in lipid metabolism; fatty acid biosynthesis. Its function is as follows. Catalyzes the condensation reaction of fatty acid synthesis by the addition to an acyl acceptor of two carbons from malonyl-ACP. Catalyzes the first condensation reaction which initiates fatty acid synthesis and may therefore play a role in governing the total rate of fatty acid production. Possesses both acetoacetyl-ACP synthase and acetyl transacylase activities. Its substrate specificity determines the biosynthesis of branched-chain and/or straight-chain of fatty acids. This Chlorobium luteolum (strain DSM 273 / BCRC 81028 / 2530) (Pelodictyon luteolum) protein is Beta-ketoacyl-[acyl-carrier-protein] synthase III.